The chain runs to 126 residues: Protein ApaG (126 aa).

One can recognise an ApaG domain in the interval 2-126; sequence SQLTSSVRVD…FRLSIPGLLH (125 aa).

The protein is Protein ApaG of Shewanella halifaxensis (strain HAW-EB4).